We begin with the raw amino-acid sequence, 497 residues long: Anthranilate synthase component 1 (497 aa).

Residues Ser49 and 271–273 (PYL) each bind L-tryptophan. 312-313 (GT) provides a ligand contact to chorismate. Glu339 is a Mg(2+) binding site. Residues Arg447, 461 to 463 (GAG), and Gly463 each bind chorismate. Glu476 lines the Mg(2+) pocket.

It belongs to the anthranilate synthase component I family. In terms of assembly, heterotetramer consisting of two non-identical subunits: a beta subunit (TrpG) and a large alpha subunit (TrpE). The cofactor is Mg(2+).

It carries out the reaction chorismate + L-glutamine = anthranilate + pyruvate + L-glutamate + H(+). The protein operates within amino-acid biosynthesis; L-tryptophan biosynthesis; L-tryptophan from chorismate: step 1/5. Its activity is regulated as follows. Feedback inhibited by tryptophan. Functionally, part of a heterotetrameric complex that catalyzes the two-step biosynthesis of anthranilate, an intermediate in the biosynthesis of L-tryptophan. In the first step, the glutamine-binding beta subunit (TrpG) of anthranilate synthase (AS) provides the glutamine amidotransferase activity which generates ammonia as a substrate that, along with chorismate, is used in the second step, catalyzed by the large alpha subunit of AS (TrpE) to produce anthranilate. In the absence of TrpG, TrpE can synthesize anthranilate directly from chorismate and high concentrations of ammonia. The chain is Anthranilate synthase component 1 (trpE) from Acinetobacter calcoaceticus.